The chain runs to 220 residues: Cysteine-rich venom protein VAR5 (220 aa).

A signal peptide spans 1-22; the sequence is MILLKLYLTLAAILCQSRGTTS. The SCP domain maps to 41–169; that stretch reads NKHNDLRRTV…PLKYFLVCQY (129 aa). Cystine bridges form between cysteine 77-cysteine 156, cysteine 95-cysteine 170, cysteine 151-cysteine 167, cysteine 189-cysteine 196, and cysteine 192-cysteine 201. Positions 205–220 constitute a ShKT domain; sequence CEHSNQYINCPDLTKQ.

This sequence belongs to the CRISP family. Contains 8 disulfide bonds. Expressed by the venom gland.

The protein resides in the secreted. Blocks ryanodine receptors, and potassium channels. The sequence is that of Cysteine-rich venom protein VAR5 from Varanus acanthurus (Ridge-tailed monitor).